The sequence spans 430 residues: Serine hydroxymethyltransferase (430 aa).

(6S)-5,6,7,8-tetrahydrofolate is bound by residues Leu123 and 127–129; that span reads GHL. Lys232 is subject to N6-(pyridoxal phosphate)lysine. Glu248 provides a ligand contact to (6S)-5,6,7,8-tetrahydrofolate.

This sequence belongs to the SHMT family. Homodimer. Pyridoxal 5'-phosphate is required as a cofactor.

It is found in the cytoplasm. The enzyme catalyses (6R)-5,10-methylene-5,6,7,8-tetrahydrofolate + glycine + H2O = (6S)-5,6,7,8-tetrahydrofolate + L-serine. It participates in one-carbon metabolism; tetrahydrofolate interconversion. The protein operates within amino-acid biosynthesis; glycine biosynthesis; glycine from L-serine: step 1/1. Its function is as follows. Catalyzes the reversible interconversion of serine and glycine with tetrahydrofolate (THF) serving as the one-carbon carrier. This reaction serves as the major source of one-carbon groups required for the biosynthesis of purines, thymidylate, methionine, and other important biomolecules. Also exhibits THF-independent aldolase activity toward beta-hydroxyamino acids, producing glycine and aldehydes, via a retro-aldol mechanism. The chain is Serine hydroxymethyltransferase from Anaplasma marginale (strain St. Maries).